Reading from the N-terminus, the 466-residue chain is E3 SUMO-protein ligase TRIM60 (466 aa).

The RING-type zinc-finger motif lies at 15 to 56 (CYICSDFMEDPVTSRCGHNFCFACLRLLWDDLQGNIFCPVCQ). The segment at 91–132 (EEHTVCPKHDQPLVLFCVRDRDVLCTQCSLSVEHQGHYTCPI) adopts a B box-type zinc-finger fold. The Zn(2+) site is built by cysteine 96, histidine 99, cysteine 118, and histidine 124. Residues 171–223 (LREEAQYQKIEIRYEIGQIKLFLQSEYEAHLNESHMEELRSFSELNGYLETLL) adopt a coiled-coil conformation. Residues 272–462 (LSLPAQYSGL…LEILTHPTPD (191 aa)) form the B30.2/SPRY domain.

Belongs to the TRIM/RBCC family.

Its function is as follows. E3 SUMO-protein ligase that mediates SUMOylation of TAB2 leading to inhibition of NF-kappa-B and MAPK pathways by suppressing the TRAF6/TAB2/TAK1 complex. The sequence is that of E3 SUMO-protein ligase TRIM60 (Trim60) from Mus musculus (Mouse).